Here is a 97-residue protein sequence, read N- to C-terminus: Ferredoxin-thioredoxin reductase, variable chain (97 aa).

The protein belongs to the ferredoxin thioredoxin reductase alpha subunit family. Heterodimer of subunit A (variable subunit) and subunit B (catalytic subunit). Heterodimeric FTR forms a complex with ferredoxin and thioredoxin.

It localises to the plastid. It is found in the chloroplast. Its function is as follows. Variable subunit of the ferredoxin-thioredoxin reductase (FTR), which catalyzes the two-electron reduction of thioredoxins by the electrons provided by reduced ferredoxin. The chain is Ferredoxin-thioredoxin reductase, variable chain from Zea mays (Maize).